Consider the following 487-residue polypeptide: MTTHYIAGNWQAGQGETLQSLNPVTQAVVWQGQGAVASQVDAAVQAARQAFPAWAQLSLEARIDVLEKFAAQLKVHAEAMAQCIGEETGKPLWESATEVTSMINKVAISVQSYRERTGEKSGPLADATAVLRHKPHGVVAVFGPYNFPGHLPNGHIVPALLAGNCVVFKPSELTPKVAELTVNCWIAAGLPAGVLNLVQGARETGVALAANPGIDGLFFTGSSRTGNLLHQQFAGRPDKILALEMGGNNPLVVDEVKDLDAAVYTIIQSAFISAGQRCTCARRLLVPQGSWGDALIARLVDVCKTITVGAFDEQPAPFMGSVISLQAARALIAAQAELAAKGGVKLLEMTQPQADAALLTPGIIDVTAVDERPDEEFFGPLLQVIRYVDFDAAIDEANNTQYGLAAGLLSDSRARYQYFWLRSRAGIVNWNKQLTGAASSAPFGGVGASGNHRASAYYAADYCAYPVASLETASLALPATLTPGVTL.

Gly-221–Gly-226 contributes to the NAD(+) binding site. Residues Glu-244 and Cys-278 contribute to the active site.

This sequence belongs to the aldehyde dehydrogenase family. AstD subfamily.

The catalysed reaction is N-succinyl-L-glutamate 5-semialdehyde + NAD(+) + H2O = N-succinyl-L-glutamate + NADH + 2 H(+). The protein operates within amino-acid degradation; L-arginine degradation via AST pathway; L-glutamate and succinate from L-arginine: step 4/5. Functionally, catalyzes the NAD-dependent reduction of succinylglutamate semialdehyde into succinylglutamate. This chain is N-succinylglutamate 5-semialdehyde dehydrogenase, found in Pseudomonas putida (strain GB-1).